The sequence spans 504 residues: AMP phosphorylase (504 aa).

AMP is bound by residues Gly169, 195–200 (SRAITS), and Thr204. Asp257 acts as the Proton donor in catalysis. 2 residues coordinate AMP: Ser265 and Lys289.

Belongs to the thymidine/pyrimidine-nucleoside phosphorylase family. Type 2 subfamily.

The enzyme catalyses AMP + phosphate = alpha-D-ribose 1,5-bisphosphate + adenine. The catalysed reaction is CMP + phosphate = cytosine + alpha-D-ribose 1,5-bisphosphate. It catalyses the reaction UMP + phosphate = alpha-D-ribose 1,5-bisphosphate + uracil. Catalyzes the conversion of AMP and phosphate to adenine and ribose 1,5-bisphosphate (R15P). Exhibits phosphorylase activity toward CMP and UMP in addition to AMP. Functions in an archaeal AMP degradation pathway, together with R15P isomerase and RubisCO. The protein is AMP phosphorylase of Methanococcus aeolicus (strain ATCC BAA-1280 / DSM 17508 / OCM 812 / Nankai-3).